The following is a 102-amino-acid chain: Small ribosomal subunit protein uS10 (102 aa).

Belongs to the universal ribosomal protein uS10 family. As to quaternary structure, part of the 30S ribosomal subunit.

In terms of biological role, involved in the binding of tRNA to the ribosomes. The sequence is that of Small ribosomal subunit protein uS10 from Streptococcus pyogenes serotype M12 (strain MGAS2096).